The sequence spans 324 residues: Acetyl-coenzyme A carboxylase carboxyl transferase subunit alpha (324 aa).

Residues 37–291 (ILEDKLENLE…DLMLRKTFEQ (255 aa)) form the CoA carboxyltransferase C-terminal domain.

This sequence belongs to the AccA family. In terms of assembly, acetyl-CoA carboxylase is a heterohexamer composed of biotin carboxyl carrier protein (AccB), biotin carboxylase (AccC) and two subunits each of ACCase subunit alpha (AccA) and ACCase subunit beta (AccD).

The protein localises to the cytoplasm. It carries out the reaction N(6)-carboxybiotinyl-L-lysyl-[protein] + acetyl-CoA = N(6)-biotinyl-L-lysyl-[protein] + malonyl-CoA. It participates in lipid metabolism; malonyl-CoA biosynthesis; malonyl-CoA from acetyl-CoA: step 1/1. Component of the acetyl coenzyme A carboxylase (ACC) complex. First, biotin carboxylase catalyzes the carboxylation of biotin on its carrier protein (BCCP) and then the CO(2) group is transferred by the carboxyltransferase to acetyl-CoA to form malonyl-CoA. This Bacillus cereus (strain Q1) protein is Acetyl-coenzyme A carboxylase carboxyl transferase subunit alpha.